A 567-amino-acid chain; its full sequence is Geranylgeranyl transferase type-2 subunit alpha (567 aa).

6 PFTA repeats span residues 44–78 (LDES…QLET), 88–122 (LVKA…RLPE), 124–158 (NWTR…QAAV), 159–193 (PPAE…QLHP), 207–241 (VLLK…RADP), and 363–397 (VLQS…ALDP). Position 98 is a phosphoserine (serine 98). 5 LRR repeats span residues 442–463 (EVRV…EQLL), 464–486 (LVTH…AALR), 487–508 (CLEV…TNLP), 509–530 (RLQE…QPLA), and 534–555 (RLVL…LEQL).

The protein belongs to the protein prenyltransferase subunit alpha family. In terms of assembly, heterotrimer composed of RABGGTA, RABGGTB and CHM; within this trimer, RABGGTA and RABGGTB form the catalytic component B, while CHM (component A) mediates peptide substrate binding. The Rab GGTase dimer (RGGT) interacts with CHM (component A) prior to Rab protein binding; the association is stabilized by geranylgeranyl pyrophosphate (GGpp). The CHM:RGGT:Rab complex is destabilized by GGpp. Interacts with non-phosphorylated form of RAB8A; phosphorylation of RAB8A at 'Thr-72' disrupts this interaction.

It carries out the reaction geranylgeranyl diphosphate + L-cysteinyl-[protein] = S-geranylgeranyl-L-cysteinyl-[protein] + diphosphate. With respect to regulation, the enzymatic reaction requires the aid of a Rab escort protein (also called component A), such as CHM. Functionally, catalyzes the transfer of a geranylgeranyl moiety from geranylgeranyl diphosphate to both cysteines of Rab proteins with the C-terminal sequence -XXCC, -XCXC and -CCXX, such as RAB1A, RAB3A, RAB5A and RAB7A. The sequence is that of Geranylgeranyl transferase type-2 subunit alpha (RABGGTA) from Pongo abelii (Sumatran orangutan).